A 316-amino-acid polypeptide reads, in one-letter code: tRNA methyltransferase 10 homolog B (316 aa).

The stretch at glutamate 73 to serine 98 forms a coiled coil. Positions alanine 77–glutamate 96 are disordered. The 198-residue stretch at isoleucine 113–valine 310 folds into the SAM-dependent MTase TRM10-type domain.

The protein belongs to the class IV-like SAM-binding methyltransferase superfamily. TRM10 family.

The enzyme catalyses guanosine(9) in tRNA + S-adenosyl-L-methionine = N(1)-methylguanosine(9) in tRNA + S-adenosyl-L-homocysteine + H(+). In terms of biological role, S-adenosyl-L-methionine-dependent guanine N(1)-methyltransferase that catalyzes the formation of N(1)-methylguanine at position 9 (m1G9) in tRNAs. Probably not able to catalyze formation of N(1)-methyladenine at position 9 (m1A9) in tRNAs. The sequence is that of tRNA methyltransferase 10 homolog B (TRMT10B) from Bos taurus (Bovine).